The sequence spans 580 residues: F-box only protein 24 (580 aa).

In terms of domain architecture, F-box spans 36–82 (PISIQLFPPELVEHIISFLPVRDLVALGQTCRYFHEVCDGEGVWRRI). An RCC1 repeat occupies 376 to 425 (GRIFMQGNNRYGQLGTGDKMDRGEPTQVCYLQRPITLWCGLNHSLVLSQS).

Directly interacts with SKP1 and CUL1.

Functionally, substrate-recognition component of the SCF (SKP1-CUL1-F-box protein)-type E3 ubiquitin ligase complex. The chain is F-box only protein 24 (FBXO24) from Homo sapiens (Human).